We begin with the raw amino-acid sequence, 115 residues long: NADH-ubiquinone oxidoreductase chain 3 (115 aa).

3 consecutive transmembrane segments (helical) span residues 3-23 (LMLTLLTNTLLASLLVLIAFW), 55-75 (FFLVAITFLLFDLEIALLLPL), and 84-104 (LNTMLIMALVLISLLAISLAY).

This sequence belongs to the complex I subunit 3 family. Core subunit of respiratory chain NADH dehydrogenase (Complex I) which is composed of 45 different subunits. Interacts with TMEM186. Interacts with TMEM242.

The protein resides in the mitochondrion inner membrane. The enzyme catalyses a ubiquinone + NADH + 5 H(+)(in) = a ubiquinol + NAD(+) + 4 H(+)(out). Core subunit of the mitochondrial membrane respiratory chain NADH dehydrogenase (Complex I) which catalyzes electron transfer from NADH through the respiratory chain, using ubiquinone as an electron acceptor. Essential for the catalytic activity of complex I. This chain is NADH-ubiquinone oxidoreductase chain 3, found in Equus caballus (Horse).